The primary structure comprises 762 residues: 5-methyltetrahydropteroyltriglutamate--homocysteine methyltransferase (762 aa).

5-methyltetrahydropteroyltri-L-glutamate is bound by residues Arg17 to Lys20 and Lys111. L-homocysteine contacts are provided by residues Ile435–Ser437 and Glu488. L-methionine-binding positions include Ile435–Ser437 and Glu488. 5-methyltetrahydropteroyltri-L-glutamate contacts are provided by residues Arg519 to Cys520 and Trp565. L-homocysteine is bound at residue Asp603. Residue Asp603 participates in L-methionine binding. Glu609 lines the 5-methyltetrahydropteroyltri-L-glutamate pocket. 3 residues coordinate Zn(2+): His645, Cys647, and Glu669. Catalysis depends on His698, which acts as the Proton donor. Position 730 (Cys730) interacts with Zn(2+).

Belongs to the vitamin-B12 independent methionine synthase family. Zn(2+) serves as cofactor.

It carries out the reaction 5-methyltetrahydropteroyltri-L-glutamate + L-homocysteine = tetrahydropteroyltri-L-glutamate + L-methionine. Its pathway is amino-acid biosynthesis; L-methionine biosynthesis via de novo pathway; L-methionine from L-homocysteine (MetE route): step 1/1. Functionally, catalyzes the transfer of a methyl group from 5-methyltetrahydrofolate to homocysteine resulting in methionine formation. The protein is 5-methyltetrahydropteroyltriglutamate--homocysteine methyltransferase of Bacillus cereus (strain G9842).